The primary structure comprises 77 residues: UPF0270 protein Spro_4577 (77 aa).

It belongs to the UPF0270 family.

In Serratia proteamaculans (strain 568), this protein is UPF0270 protein Spro_4577.